Reading from the N-terminus, the 215-residue chain is Enolase-phosphatase E1 (215 aa).

Mg(2+)-binding residues include D11 and E13. Residues 117-118 (SS) and K151 contribute to the substrate site. Position 174 (D174) interacts with Mg(2+).

Belongs to the HAD-like hydrolase superfamily. MasA/MtnC family. Monomer. Mg(2+) serves as cofactor.

The protein resides in the cytoplasm. Its subcellular location is the nucleus. The catalysed reaction is 5-methylsulfanyl-2,3-dioxopentyl phosphate + H2O = 1,2-dihydroxy-5-(methylsulfanyl)pent-1-en-3-one + phosphate. The protein operates within amino-acid biosynthesis; L-methionine biosynthesis via salvage pathway; L-methionine from S-methyl-5-thio-alpha-D-ribose 1-phosphate: step 3/6. It participates in amino-acid biosynthesis; L-methionine biosynthesis via salvage pathway; L-methionine from S-methyl-5-thio-alpha-D-ribose 1-phosphate: step 4/6. In terms of biological role, bifunctional enzyme that catalyzes the enolization of 2,3-diketo-5-methylthiopentyl-1-phosphate (DK-MTP-1-P) into the intermediate 2-hydroxy-3-keto-5-methylthiopentenyl-1-phosphate (HK-MTPenyl-1-P), which is then dephosphorylated to form the acireductone 1,2-dihydroxy-3-keto-5-methylthiopentene (DHK-MTPene). The protein is Enolase-phosphatase E1 (utr4) of Schizosaccharomyces japonicus (strain yFS275 / FY16936) (Fission yeast).